The primary structure comprises 247 residues: 1-(5-phosphoribosyl)-5-[(5-phosphoribosylamino)methylideneamino] imidazole-4-carboxamide isomerase (247 aa).

The active-site Proton acceptor is the D8. D129 functions as the Proton donor in the catalytic mechanism.

This sequence belongs to the HisA/HisF family.

It localises to the cytoplasm. The catalysed reaction is 1-(5-phospho-beta-D-ribosyl)-5-[(5-phospho-beta-D-ribosylamino)methylideneamino]imidazole-4-carboxamide = 5-[(5-phospho-1-deoxy-D-ribulos-1-ylimino)methylamino]-1-(5-phospho-beta-D-ribosyl)imidazole-4-carboxamide. It participates in amino-acid biosynthesis; L-histidine biosynthesis; L-histidine from 5-phospho-alpha-D-ribose 1-diphosphate: step 4/9. The chain is 1-(5-phosphoribosyl)-5-[(5-phosphoribosylamino)methylideneamino] imidazole-4-carboxamide isomerase from Solidesulfovibrio magneticus (strain ATCC 700980 / DSM 13731 / RS-1) (Desulfovibrio magneticus).